Reading from the N-terminus, the 705-residue chain is Ovotransferrin (705 aa).

Positions 1–19 (MKLILCTVLSLGIAAVCFA) are cleaved as a signal peptide. Transferrin-like domains lie at 26–352 (IRWC…SMRK) and 364–689 (IQWC…SLKT). Intrachain disulfides connect Cys29–Cys64 and Cys39–Cys55. Positions 79 and 111 each coordinate Fe(3+). 4 disulfide bridges follow: Cys134–Cys216, Cys179–Cys193, Cys190–Cys201, and Cys247–Cys261. The hydrogencarbonate site is built by Thr136, Arg140, Ala142, and Gly143. Tyr210 contributes to the Fe(3+) binding site. His269 is a binding site for Fe(3+). The connecting region stretch occupies residues 352 to 360 (KDQLTPSPR). 2 cysteine pairs are disulfide-bonded: Cys367/Cys399 and Cys377/Cys390. Residues Asp414 and Tyr450 each coordinate Fe(3+). Cystine bridges form between Cys424–Cys699, Cys440–Cys662, Cys473–Cys549, Cys497–Cys690, Cys507–Cys521, Cys518–Cys532, and Cys589–Cys603. Hydrogencarbonate is bound by residues Thr475, Arg479, Ala481, and Gly482. N-linked (GlcNAc...) asparagine glycosylation is present at Asn492. Tyr543 contributes to the Fe(3+) binding site. A Fe(3+)-binding site is contributed by His611.

Belongs to the transferrin family. As to quaternary structure, monomer. In terms of processing, different forms of hen transferrin are distinguished by their carbohydrate composition. Ovotransferrin and embryo serum transferrin but not adult serum transferrin, have bisecting N-acetylglucosamine. Transferrin secreted by embryo hepatocytes in primary culture is marked by the presence of (alpha1-6) fucosylation of the core N-acetylglucosamine. Serum transferrins also differ in the number of attached neuraminic acid residues. In both embryo forms, sialylation occurs on the Man (alpha 1-3)-linked antennae. As to expression, expressed in the magnum of the oviduct (at protein level).

It localises to the secreted. Functionally, transferrins are iron binding transport proteins which can bind two Fe(3+) ions in association with the binding of an anion, usually bicarbonate. Responsible for the transport of iron from sites of absorption and heme degradation to those of storage and utilization. There are two forms of hen transferrin, ovotransferrin, found in the ovoducts and, serum transferrin, secreted by the liver. Serum transferrin may also have a role in stimulating cell proliferation and is regulated by iron levels. Ovotransferrin has a bacteriostatic function and, is not controlled by iron levels. In Gallus gallus (Chicken), this protein is Ovotransferrin.